A 454-amino-acid chain; its full sequence is Probable ECA polymerase (454 aa).

11 helical membrane-spanning segments follow: residues 6–26 (FSGL…LTWF), 37–57 (VFFS…TSIL), 63–83 (VAVV…CFYA), 122–142 (MMAV…FLLF), 157–177 (GVAL…VYFL), 183–203 (AWLF…MIVG), 209–229 (IIIA…ISPG), 230–250 (MLAA…LKRY), 343–363 (LVVM…GLII), 380–400 (YKAA…IVLA), and 411–431 (VIFF…IYWL).

Belongs to the WzyE family. As to quaternary structure, probably part of a complex composed of WzxE, WzyE and WzzE.

The protein resides in the cell inner membrane. It participates in bacterial outer membrane biogenesis; enterobacterial common antigen biosynthesis. Probably involved in the polymerization of enterobacterial common antigen (ECA) trisaccharide repeat units. This is Probable ECA polymerase from Cronobacter sakazakii (strain ATCC BAA-894) (Enterobacter sakazakii).